The primary structure comprises 642 residues: Regulator of MON1-CCZ1 complex (642 aa).

In terms of domain architecture, Mic1 spans 462-616; it reads RPYTESILML…KLYETLSFPK (155 aa).

It belongs to the RMC1 family. Component of the Mon1-Ccz1 guanyl-nucleotide exchange factor complex made up of Mon1, Ccz1 and Bulli; the interaction of Bulli with the Mon1-Ccz1 heterodimer is mediated via the C-terminal Mic1 domain of Bulli. Mon1 and Ccz1 form a stable complex which displays Rab7 GEF activity with or without Bulli; GEF activity is enhanced by Bulli possibly by improving membrane association of the complex.

Its subcellular location is the late endosome. In terms of biological role, positive regulator of the Rab7 guanyl-nucleotide exchange activity of the Mon1-Ccz1 complex, possibly by enhancing its endosomal membrane association. As part of the Mon1-Ccz1 complex involved in endolysosomal biogenesis possibly by mediating Rab conversion, the replacement of Rab5 with Rab7 during late endosome maturation. This chain is Regulator of MON1-CCZ1 complex, found in Drosophila melanogaster (Fruit fly).